The sequence spans 388 residues: Glutamate 5-kinase (388 aa).

K21 serves as a coordination point for ATP. S61, D148, and N160 together coordinate substrate. ATP contacts are provided by residues 180 to 181 and 222 to 228; these read TD and TGGMITK. Residues 285–363 enclose the PUA domain; that stretch reads RGSVFLDPGA…RWLARELGAE (79 aa).

This sequence belongs to the glutamate 5-kinase family.

The protein localises to the cytoplasm. The catalysed reaction is L-glutamate + ATP = L-glutamyl 5-phosphate + ADP. It functions in the pathway amino-acid biosynthesis; L-proline biosynthesis; L-glutamate 5-semialdehyde from L-glutamate: step 1/2. Its function is as follows. Catalyzes the transfer of a phosphate group to glutamate to form L-glutamate 5-phosphate. This Thermobifida fusca (strain YX) protein is Glutamate 5-kinase.